A 154-amino-acid chain; its full sequence is 17 kDa surface antigen (154 aa).

Residues 1–19 form the signal peptide; that stretch reads MKLLSKIMIIALAASMLQA. Cysteine 20 is lipidated: N-palmitoyl cysteine. Cysteine 20 carries S-diacylglycerol cysteine lipidation.

This sequence belongs to the rickettsiale 17 kDa surface antigen family.

The protein localises to the cell outer membrane. This Rickettsia montanensis protein is 17 kDa surface antigen (omp).